A 378-amino-acid chain; its full sequence is MAKKLKKNEEITKKFGDERRKALDDALKNIEKDFGKGAVMRLGERAEQKVQVMSSGSLALDIALGAGGYPKGRIIEIYGPESSGKTTVALHAVAQAQKEGGIAAFIDAEHALDPAYAAALGVNIDELLLAQPDSGEQGLEIAGKLIDSGAVDLVVVDSVAALVPRAEIDGDIGDSHVGLQARMMSQAMRKLSASINKTKTIAIFINQLREKVGVMFGNPETTPGGRALKFYASVRLDVRGTTQIKGTGDQKDSSIGKETKIKVVKNKVAPPFKVAEVEIMYGEGISRTGELVKIASDLDIIQKAGAWFSYNGEKIGQGSENAKRYLADHPQLFDEIDRKVRVKFGLLEESEEESAMAVASEETDDLALDLDNGIEIED.

79-86 (GPESSGKT) contacts ATP.

It belongs to the RecA family.

Its subcellular location is the cytoplasm. Can catalyze the hydrolysis of ATP in the presence of single-stranded DNA, the ATP-dependent uptake of single-stranded DNA by duplex DNA, and the ATP-dependent hybridization of homologous single-stranded DNAs. It interacts with LexA causing its activation and leading to its autocatalytic cleavage. The polypeptide is Protein RecA (Streptococcus pyogenes serotype M49 (strain NZ131)).